The chain runs to 149 residues: Large ribosomal subunit protein uL15 (149 aa).

Residues 14 to 63 are disordered; that stretch reads ASRKRVGRGSGSGLGCTSGKGNKGQNARAGGGVRPGFEGGQMPLQRRLPK. Gly residues-rich tracts occupy residues 21–35 and 42–52; these read RGSGSGLGCTSGKGN and AGGGVRPGFEG.

Belongs to the universal ribosomal protein uL15 family. As to quaternary structure, part of the 50S ribosomal subunit.

Binds to the 23S rRNA. The chain is Large ribosomal subunit protein uL15 from Nitratidesulfovibrio vulgaris (strain DSM 19637 / Miyazaki F) (Desulfovibrio vulgaris).